Reading from the N-terminus, the 122-residue chain is Small ribosomal subunit protein bS6 (122 aa).

Belongs to the bacterial ribosomal protein bS6 family.

Its function is as follows. Binds together with bS18 to 16S ribosomal RNA. The protein is Small ribosomal subunit protein bS6 (rpsF) of Neisseria meningitidis serogroup B (strain ATCC BAA-335 / MC58).